The chain runs to 169 residues: Protein HIGH ARSENIC CONTENT 1, mitochondrial (169 aa).

The transit peptide at 1-59 directs the protein to the mitochondrion; the sequence is MYTYSLLNLSHCRRQTRKKRKTDHTEGFLMEETKPKTVEDVETVDVYTAKGFLSTGHRY. Residues 60–153 form the Rhodanese domain; that stretch reads LDVRTNEEFA…WVDAGFAGDK (94 aa). Cys113 functions as the Cysteine persulfide intermediate in the catalytic mechanism.

In terms of tissue distribution, expressed in root hairs, epidermal cells at the surface of the root and in the pericycle within the stele.

It is found in the mitochondrion. It carries out the reaction [glutaredoxin]-dithiol + arsenate + glutathione + H(+) = glutathionyl-S-S-[glutaredoxin] + arsenite + H2O. Inhibited by trobenzenesulphonic acid (TNBS). Arsenate reductase critical for arsenic tolerance. Reduces arsenate to arsenite in the root, facilitating efflux of arsenic back into the soil to limit both its accumulation in the root and transport to the shoot. Essential for arsenite efflux from the root, but not necessary for arsenate uptake. This chain is Protein HIGH ARSENIC CONTENT 1, mitochondrial, found in Arabidopsis thaliana (Mouse-ear cress).